The primary structure comprises 247 residues: Segregation and condensation protein A (247 aa).

Belongs to the ScpA family. As to quaternary structure, component of a cohesin-like complex composed of ScpA, ScpB and the Smc homodimer, in which ScpA and ScpB bind to the head domain of Smc. The presence of the three proteins is required for the association of the complex with DNA.

It is found in the cytoplasm. Functionally, participates in chromosomal partition during cell division. May act via the formation of a condensin-like complex containing Smc and ScpB that pull DNA away from mid-cell into both cell halves. This Bacillus cereus (strain G9842) protein is Segregation and condensation protein A.